The primary structure comprises 100 residues: Urease subunit gamma (100 aa).

This sequence belongs to the urease gamma subunit family. In terms of assembly, heterotrimer of UreA (gamma), UreB (beta) and UreC (alpha) subunits. Three heterotrimers associate to form the active enzyme.

It is found in the cytoplasm. It carries out the reaction urea + 2 H2O + H(+) = hydrogencarbonate + 2 NH4(+). It participates in nitrogen metabolism; urea degradation; CO(2) and NH(3) from urea (urease route): step 1/1. This Rhizobium leguminosarum bv. viciae protein is Urease subunit gamma.